Reading from the N-terminus, the 450-residue chain is Glutamyl-tRNA reductase (450 aa).

Residues 50–53, S109, 114–116, and Q120 each bind substrate; these read TCNR and EPQ. C51 serves as the catalytic Nucleophile. Position 189–194 (189–194) interacts with NADP(+); it reads GAGEMA. The interval 422–450 is disordered; that stretch reads NEPEQPEAHKNRKRPQPDLPAGCPGKTIL.

Belongs to the glutamyl-tRNA reductase family. As to quaternary structure, homodimer.

The catalysed reaction is (S)-4-amino-5-oxopentanoate + tRNA(Glu) + NADP(+) = L-glutamyl-tRNA(Glu) + NADPH + H(+). It participates in porphyrin-containing compound metabolism; protoporphyrin-IX biosynthesis; 5-aminolevulinate from L-glutamyl-tRNA(Glu): step 1/2. In terms of biological role, catalyzes the NADPH-dependent reduction of glutamyl-tRNA(Glu) to glutamate 1-semialdehyde (GSA). The polypeptide is Glutamyl-tRNA reductase (Oleidesulfovibrio alaskensis (strain ATCC BAA-1058 / DSM 17464 / G20) (Desulfovibrio alaskensis)).